We begin with the raw amino-acid sequence, 943 residues long: MPNPNDVTIDIPLTSVSSRGQTGARNNSTNIPNSPSGGYSAGAEHNGGAEKGGLTSSPPSSSLGFGHRRRRTINDKTGLPAEEPEDGTVTRMGRFYQAVLNFSTVTRYLIYIAPLAALLAIPIIVGATAAEDAKIGGVSLPWFFCWVEVVWVSLWVCKLVAKVIPFVFQFVCGIVSAGTRKYALILRNLEIPITMVLWMIVSLVTFLPIMVYNPRNKREGDTETKSWEKSVKNVLFAFLVCALIFLGEKTLVQLISISYHRKQFDARIKESKRNINLIGILYDASRSMFPMYCKEFREDDAIISDSILLGGPETGRPGHSRSNSAAPLRFIRGVQQNVGRIGGKITGALGDVAHEITGKQVFNSSAARSIVSEALERRRSSEALARRIWMSFVIEGREALYLDDIMEVLGAGKEAEAEECFTMLDRDGNGDISLDEIILAISEIGRTRKTLNHSVHDVDQAIHVLDNLLATIAFIIAVLVFVSFVTSGFGTVIAAGATSLLSLSFVFATTAQEVLGSCIFLFVKHPFDIGDRVEIDSKPYIVQRISLLYSVFRNVNDNRVTQIPNVVLNTVWIDNYSRSSAMQEKLTIEVNIDTTTEEIQALKDEIETFVRSPDNKRDFHPDVDIEVSGVGALDKLELTVGLFHKSNWAIESVRAARRSKFMVALVAAVKKVPIRTPGAAAEDAAAADGDRPDDKPDDAEQPPARQSSISEGIRHPTVPDDSFPSDSKSTGVDLGRPGSVQRRGASATAATGNNSAGSAYSETTLNNTVSEPYQRSFTPNTGDRDTDHYHGSMSSPVTERHLGVSHDSIARKASTASTGRRRAGIMTTANQSLASPTTMQSESALPPHLQPPPPLQPSSSQYSQQYPQQQSQSPYSYTYSERYDQPESSLQPLEHTTSYNQSLPQVYEYAPAADRNSLEGHSPHVDPRHMTEEQRRNYESRRL.

The interval 1 to 67 (MPNPNDVTID…PPSSSLGFGH (67 aa)) is disordered. The Cytoplasmic segment spans residues 1-107 (MPNPNDVTID…AVLNFSTVTR (107 aa)). A compositionally biased stretch (polar residues) spans 14 to 37 (TSVSSRGQTGARNNSTNIPNSPSG). A helical transmembrane segment spans residues 108 to 130 (YLIYIAPLAALLAIPIIVGATAA). Residues 131–149 (EDAKIGGVSLPWFFCWVEV) lie on the Lumenal side of the membrane. The chain crosses the membrane as a helical span at residues 150–175 (VWVSLWVCKLVAKVIPFVFQFVCGIV). The Cytoplasmic portion of the chain corresponds to 176–195 (SAGTRKYALILRNLEIPITM). A helical membrane pass occupies residues 196–214 (VLWMIVSLVTFLPIMVYNP). The Lumenal segment spans residues 215 to 233 (RNKREGDTETKSWEKSVKN). A helical transmembrane segment spans residues 234-259 (VLFAFLVCALIFLGEKTLVQLISISY). Topologically, residues 260-468 (HRKQFDARIK…DQAIHVLDNL (209 aa)) are cytoplasmic. In terms of domain architecture, EF-hand spans 412–447 (GKEAEAEECFTMLDRDGNGDISLDEIILAISEIGRT). Ca(2+) contacts are provided by Asp425, Asp427, Asn429, Asp431, and Glu436. Residues 469–489 (LATIAFIIAVLVFVSFVTSGF) form a helical membrane-spanning segment. At 490–502 (GTVIAAGATSLLS) the chain is on the lumenal side. The helical transmembrane segment at 503-523 (LSFVFATTAQEVLGSCIFLFV) threads the bilayer. Over 524–943 (KHPFDIGDRV…QRRNYESRRL (420 aa)) the chain is Cytoplasmic. Residues 677-943 (PGAAAEDAAA…QRRNYESRRL (267 aa)) form a disordered region. Low complexity-rich tracts occupy residues 678–687 (GAAAEDAAAA) and 744–759 (GASA…AGSA). Positions 760–781 (YSETTLNNTVSEPYQRSFTPNT) are enriched in polar residues. The segment covering 798-810 (TERHLGVSHDSIA) has biased composition (basic and acidic residues). Residues 827–842 (TTANQSLASPTTMQSE) are compositionally biased toward polar residues. Positions 857-880 (PSSSQYSQQYPQQQSQSPYSYTYS) are enriched in low complexity. A compositionally biased stretch (polar residues) spans 886-904 (PESSLQPLEHTTSYNQSLP). The span at 916 to 943 (NSLEGHSPHVDPRHMTEEQRRNYESRRL) shows a compositional bias: basic and acidic residues.

Belongs to the MscS (TC 1.A.23) family.

Its subcellular location is the cell membrane. It catalyses the reaction Ca(2+)(in) = Ca(2+)(out). Acts as a mechanosensitive calcium channel in response to membrane stretch. Regulates intracellular calcium levels and cell volume for survival in response to hypo-osmotic shock. Involved in maintaining vacuole integrity and protecting the nuclear envelope upon hypo-osmotic shock. seems to contribute to CaCl2 toxicityIn contracstz to mscA, mscB seems to contribute to CaCl(2) toxicity. In Emericella nidulans (strain FGSC A4 / ATCC 38163 / CBS 112.46 / NRRL 194 / M139) (Aspergillus nidulans), this protein is Mechanosensitive ion channel protein BA.